The following is a 564-amino-acid chain: MTKEHSEQQKDLRIRSKVISEGVSRTPNRAYLRALGFEDEDFQKPMIGVASTWSEVTPCNMHIDGLARASKQGISEAGASPLIFNTITVSDGISMGTDGMRFSLPSREIIADSIESVVSAENLDALVAIGGCDKNMPGCMIGIARLNLPAVFVYGGTILPGKLDGKDLDAVSAFEGVGQYNNGEIDKEALHKVECAACPGAGACGGMFTANTMSSAIEAMGMSLPGSASHPAVSTNKSKDSRAAGKAVYKLLEKGIYPKDIMTKEAFENAITVVMALGGSTNAILHLLAIAHTIEVDLTLDDFEKIRKRVPHIADLRPSGKYVMAHLDEVGGIPAVMKLLHDKGLIHGDCLTVTGKTVAENLEQQPDLTDNKSIIDFDNPKHATGPLVILKGNLAPEGAVAKISGLSVTYIKGPARVFDSESKATKAILNDEIKPGDVVVIRYAGPKGAPGMPEMLSASSILVGKGLGESVALLTDGRFSGGSHGLVIGHAAPESQVGGPMALLEENDTITIDAEKLEISFDVSDEELERRNKQWQAPPLKANRGTLAKYAKLVSSASKGAITD.

Residue C59 participates in [2Fe-2S] cluster binding. Mg(2+) is bound at residue D91. C132 contributes to the [2Fe-2S] cluster binding site. 2 residues coordinate Mg(2+): D133 and K134. N6-carboxylysine is present on K134. C204 is a [2Fe-2S] cluster binding site. Mg(2+) is bound at residue E454. The Proton acceptor role is filled by S480.

It belongs to the IlvD/Edd family. In terms of assembly, homodimer. The cofactor is [2Fe-2S] cluster. Mg(2+) is required as a cofactor.

The enzyme catalyses (2R)-2,3-dihydroxy-3-methylbutanoate = 3-methyl-2-oxobutanoate + H2O. It catalyses the reaction (2R,3R)-2,3-dihydroxy-3-methylpentanoate = (S)-3-methyl-2-oxopentanoate + H2O. It participates in amino-acid biosynthesis; L-isoleucine biosynthesis; L-isoleucine from 2-oxobutanoate: step 3/4. Its pathway is amino-acid biosynthesis; L-valine biosynthesis; L-valine from pyruvate: step 3/4. In terms of biological role, functions in the biosynthesis of branched-chain amino acids. Catalyzes the dehydration of (2R,3R)-2,3-dihydroxy-3-methylpentanoate (2,3-dihydroxy-3-methylvalerate) into 2-oxo-3-methylpentanoate (2-oxo-3-methylvalerate) and of (2R)-2,3-dihydroxy-3-methylbutanoate (2,3-dihydroxyisovalerate) into 2-oxo-3-methylbutanoate (2-oxoisovalerate), the penultimate precursor to L-isoleucine and L-valine, respectively. The chain is Dihydroxy-acid dehydratase 2 from Staphylococcus saprophyticus subsp. saprophyticus (strain ATCC 15305 / DSM 20229 / NCIMB 8711 / NCTC 7292 / S-41).